Consider the following 370-residue polypeptide: Cobalt-precorrin-5B C(1)-methyltransferase (370 aa).

It belongs to the CbiD family.

The enzyme catalyses Co-precorrin-5B + S-adenosyl-L-methionine = Co-precorrin-6A + S-adenosyl-L-homocysteine. It functions in the pathway cofactor biosynthesis; adenosylcobalamin biosynthesis; cob(II)yrinate a,c-diamide from sirohydrochlorin (anaerobic route): step 6/10. Its function is as follows. Catalyzes the methylation of C-1 in cobalt-precorrin-5B to form cobalt-precorrin-6A. In Pseudomonas syringae pv. syringae (strain B728a), this protein is Cobalt-precorrin-5B C(1)-methyltransferase.